Consider the following 180-residue polypeptide: Bifunctional protein PyrR 1 (180 aa).

Residues 39–40, 103–111, Arg-136, and Val-160 each bind substrate; these read TR and DDVLFTGRT. The PRPP-binding motif lies at 99 to 111; the sequence is VILVDDVLFTGRT.

The protein belongs to the purine/pyrimidine phosphoribosyltransferase family. PyrR subfamily. As to quaternary structure, homodimer and homohexamer; in equilibrium.

It catalyses the reaction UMP + diphosphate = 5-phospho-alpha-D-ribose 1-diphosphate + uracil. Functionally, regulates transcriptional attenuation of the pyrimidine nucleotide (pyr) operon by binding in a uridine-dependent manner to specific sites on pyr mRNA. This disrupts an antiterminator hairpin in the RNA and favors formation of a downstream transcription terminator, leading to a reduced expression of downstream genes. Also displays a weak uracil phosphoribosyltransferase activity which is not physiologically significant. This is Bifunctional protein PyrR 1 (pyrR1) from Lactiplantibacillus plantarum (strain ATCC BAA-793 / NCIMB 8826 / WCFS1) (Lactobacillus plantarum).